The following is a 508-amino-acid chain: BTB/POZ domain-containing protein At3g03510 (508 aa).

Residues 11–77 (QDLDLYVKGV…CYGYKIELSA (67 aa)) form the BTB domain. An NPH3 domain is found at 156–414 (TRLLQDLITL…MQVLFVSQMQ (259 aa)). A Phosphotyrosine modification is found at Tyr355.

Belongs to the NPH3 family.

The protein operates within protein modification; protein ubiquitination. May act as a substrate-specific adapter of an E3 ubiquitin-protein ligase complex (CUL3-RBX1-BTB) which mediates the ubiquitination and subsequent proteasomal degradation of target proteins. This Arabidopsis thaliana (Mouse-ear cress) protein is BTB/POZ domain-containing protein At3g03510.